The primary structure comprises 440 residues: Tripartite motif-containing protein 14 (440 aa).

The segment at 17 to 59 (AYGWRCPEHSERPAELFCRRCGRCVCALCPVLGAHRGHPVGLA) adopts a B box-type zinc-finger fold. C22, H25, C45, and H51 together coordinate Zn(2+). In terms of domain architecture, B30.2/SPRY spans 247–440 (ALLKTSPSPE…EGPISIPRLP (194 aa)).

It belongs to the TRIM/RBCC family. Interacts with MAVS. Interacts with WRNIP1 and PPP6C; these interactions positively regulate the RIG-I signaling pathway. Interacts with CGAS; this interaction stabilizes CGAS and promotes type I interferon production. Interacts with USP14; this interaction mediates the cleavage of 'Lys-48'-linked ubiquitination of CGAS. Interacts with TBK1. Interacts with SPI1. Interacts with KDM4D and USP14. In terms of processing, ubiquitinated. Undergoes 'Lys-63'-linked polyubiquitination; this modification allows IKBKG/NEMO recruitment to MAVS. Undergoes 'Lys-48'-linked polyubiquitination by RNF125; this modification mediates its degradation via the ubiquitin-proteasome pathway. In terms of tissue distribution, expressed with high level in spleen, thymus, liver and testis. Expressed with low level in the brain, kidney, and skeletal muscle. Expressed in various differentiation stages of B-lymphocytes.

The protein resides in the mitochondrion outer membrane. It localises to the cytoplasmic vesicle. Its subcellular location is the phagosome. Plays a role in the innate immune defense against viruses. Facilitates the type I IFN response by interacting with MAVS at the outer mitochondria membrane and thereby recruiting NF-kappa-B essential modulator IKBKG/NEMO to the MAVS signalosome, leading to the activation of both the IFN regulatory factor 3/IRF3 and NF-kappa-B pathways. Positively regulates the CGAS-induced type I interferon signaling pathway by stabilizing CGAS and inhibiting its autophagic degradation. Inhibits the transcriptional activity of SPI1 in a dose-dependent manner. Also inhibits OPTN-mediated selective autophagic degradation of KDM4D and thereby negatively regulates H3K9me2 and H3K9me3. Mechanistically, recruits USP14 to remove the 'Lys-63'-linked ubiquitination of KDM4D, preventing its recognition by OPTN and subsequent degradation. In terms of biological role, plays an essential role in the innate immune defense against viruses and bacteria. Facilitates the type I IFN response by interacting with MAVS at the outer mitochondria membrane and thereby recruiting NF-kappa-B essential modulator IKBKG/NEMO to the MAVS signalosome, leading to the activation of both the IFN regulatory factor 3/IRF3 and NF-kappa-B pathways. Positively regulates the CGAS-induced type I interferon signaling pathway by stabilizing CGAS and inhibiting its autophagic degradation. Acts as a scaffold between TBK1 and STAT3 to promote phosphorylation of STAT3 and resolve interferon-stimulated gene (ISG) expression. Inhibits the transcriptional activity of SPI1 in a dose-dependent manner. This Mus musculus (Mouse) protein is Tripartite motif-containing protein 14 (Trim14).